Reading from the N-terminus, the 263-residue chain is Purine nucleoside phosphorylase SERP0752 (263 aa).

3 residues coordinate Zn(2+): H79, C124, and H141.

This sequence belongs to the purine nucleoside phosphorylase YfiH/LACC1 family. Homodimer. It depends on Cu(2+) as a cofactor. Zn(2+) serves as cofactor.

The enzyme catalyses adenosine + phosphate = alpha-D-ribose 1-phosphate + adenine. It carries out the reaction S-methyl-5'-thioadenosine + phosphate = 5-(methylsulfanyl)-alpha-D-ribose 1-phosphate + adenine. It catalyses the reaction inosine + phosphate = alpha-D-ribose 1-phosphate + hypoxanthine. The catalysed reaction is adenosine + H2O + H(+) = inosine + NH4(+). Its function is as follows. Purine nucleoside enzyme that catalyzes the phosphorolysis of adenosine and inosine nucleosides, yielding D-ribose 1-phosphate and the respective free bases, adenine and hypoxanthine. Also catalyzes the phosphorolysis of S-methyl-5'-thioadenosine into adenine and S-methyl-5-thio-alpha-D-ribose 1-phosphate. Also has adenosine deaminase activity. This Staphylococcus epidermidis (strain ATCC 35984 / DSM 28319 / BCRC 17069 / CCUG 31568 / BM 3577 / RP62A) protein is Purine nucleoside phosphorylase SERP0752.